The primary structure comprises 78 residues: Metallothionein-like protein type 2 (78 aa).

Belongs to the metallothionein superfamily. Type 15 family.

Metallothioneins have a high content of cysteine residues that bind various heavy metals. This is Metallothionein-like protein type 2 from Actinidia deliciosa (Kiwi).